Here is a 101-residue protein sequence, read N- to C-terminus: NADH-quinone oxidoreductase subunit K (101 aa).

3 helical membrane-spanning segments follow: residues 4 to 24 (LSHYLTVAAILFTLGVLGIFI), 30 to 50 (IVILMCVELILLAVNINLVAF), and 65 to 85 (FVLTVAAAEAAIGLAILVVFF).

Belongs to the complex I subunit 4L family. In terms of assembly, NDH-1 is composed of 14 different subunits. Subunits NuoA, H, J, K, L, M, N constitute the membrane sector of the complex.

It is found in the cell inner membrane. The enzyme catalyses a quinone + NADH + 5 H(+)(in) = a quinol + NAD(+) + 4 H(+)(out). In terms of biological role, NDH-1 shuttles electrons from NADH, via FMN and iron-sulfur (Fe-S) centers, to quinones in the respiratory chain. The immediate electron acceptor for the enzyme in this species is believed to be ubiquinone. Couples the redox reaction to proton translocation (for every two electrons transferred, four hydrogen ions are translocated across the cytoplasmic membrane), and thus conserves the redox energy in a proton gradient. In Methylobacterium sp. (strain 4-46), this protein is NADH-quinone oxidoreductase subunit K.